The sequence spans 516 residues: Glycosyl hydrolase family 109 protein 4 (516 aa).

Residues methionine 1–alanine 18 form the signal peptide. The N-palmitoyl cysteine moiety is linked to residue cysteine 19. Cysteine 19 carries S-diacylglycerol cysteine lipidation. Residues methionine 76–arginine 77, aspartate 98, tryptophan 146–histidine 149, glutamate 166–valine 167, and asparagine 195 each bind NAD(+). Residues tyrosine 224, arginine 247, tyrosine 259 to histidine 262, and tyrosine 337 contribute to the substrate site. Residue tyrosine 259 coordinates NAD(+).

It belongs to the Gfo/Idh/MocA family. Glycosyl hydrolase 109 subfamily. NAD(+) serves as cofactor.

It is found in the cell membrane. Functionally, glycosidase. The sequence is that of Glycosyl hydrolase family 109 protein 4 from Phocaeicola vulgatus (strain ATCC 8482 / DSM 1447 / JCM 5826 / CCUG 4940 / NBRC 14291 / NCTC 11154) (Bacteroides vulgatus).